The sequence spans 417 residues: Serine/threonine-protein phosphatase 4 regulatory subunit 2 (417 aa).

The disordered stretch occupies residues K141–D417. 2 stretches are compositionally biased toward polar residues: residues N158 to G170 and A186 to S196. The residue at position 159 (S159) is a Phosphoserine. Residues T197 to S213 show a composition bias toward basic and acidic residues. The segment covering D214–S226 has biased composition (low complexity). A Phosphoserine modification is found at S226. Residues H243–E258 show a composition bias toward basic and acidic residues. Residues T259–V268 are compositionally biased toward polar residues. Basic and acidic residues predominate over residues P283–T296. Residues E297–S313 show a composition bias toward acidic residues. Residues M320–K329 are compositionally biased toward basic and acidic residues. The segment covering S367–D376 has biased composition (low complexity). A compositionally biased stretch (polar residues) spans L378–G392. A compositionally biased stretch (acidic residues) spans E402–D417.

The protein belongs to the PPP4R2 family. Serine/threonine-protein phosphatase 4 (PP4) occurs in different assemblies of the catalytic and one or more regulatory subunits. Component of the PP4 complexes PPP4C-PPP4R2, PPP4C-PPP4R2-PPP4R3A and PPP4C-PPP4R2-PPP4R3B. The PPP4C-PPP4R2 complex appears to be a tetramer composed of 2 molecules of PPP4C and 2 molecules of PPP4R2. Interacts with DDX20/GEMIN3 and GEMIN4. Interacts with RPA2; this DNA damage-dependent interaction recruits PPP4C leading to RPA2 dephosphorylation.

It localises to the cytoplasm. The protein resides in the cytoskeleton. It is found in the microtubule organizing center. The protein localises to the centrosome. Its subcellular location is the nucleus. Its function is as follows. Regulatory subunit of serine/threonine-protein phosphatase 4 (PP4). May regulate the activity of PPP4C at centrosomal microtubule organizing centers. Its interaction with the SMN complex leads to enhance the temporal localization of snRNPs, suggesting a role of PPP4C in maturation of spliceosomal snRNPs. The PPP4C-PPP4R2-PPP4R3A PP4 complex specifically dephosphorylates H2AX phosphorylated on 'Ser-140' (gamma-H2AX) generated during DNA replication and required for DNA double strand break repair. Mediates RPA2 dephosphorylation by recruiting PPP4C to RPA2 in a DNA damage-dependent manner. RPA2 dephosphorylation is required for the efficient RPA2-mediated recruitment of RAD51 to chromatin following double strand breaks, an essential step for DNA repair. The protein is Serine/threonine-protein phosphatase 4 regulatory subunit 2 (Ppp4r2) of Mus musculus (Mouse).